The following is a 172-amino-acid chain: Putative phosphoesterase BC_1225 (172 aa).

Histidine 34 serves as the catalytic Proton donor. 2 short sequence motifs (HXTX) span residues 34-37 (HITL) and 115-118 (HLTI). Residue histidine 115 is the Proton acceptor of the active site.

It belongs to the 2H phosphoesterase superfamily. YjcG family.

The polypeptide is Putative phosphoesterase BC_1225 (Bacillus cereus (strain ATCC 14579 / DSM 31 / CCUG 7414 / JCM 2152 / NBRC 15305 / NCIMB 9373 / NCTC 2599 / NRRL B-3711)).